The primary structure comprises 1125 residues: tRNA (34-2'-O)-methyltransferase regulator WDR6 (1125 aa).

N-acetylmethionine is present on Met1. 19 WD repeats span residues 53-97 (VKRV…VVKV), 105-143 (RELW…LYDP), 147-189 (CMLQ…IWYP), 200-238 (APDR…LWKV), 247-285 (RVQN…VWSH), 289-327 (ILQA…LWHL), 335-376 (LGVS…LYDL), 381-422 (WEQL…VVPI), 425-470 (PTAA…ISAA), 476-520 (IFVK…LFPV), 559-598 (PVST…FVHG), 604-642 (VLRQ…VWSP), 645-684 (HEKL…LYRA), 739-785 (LIDI…VWAV), 848-897 (RNKH…LFLL), 905-950 (HLLA…FWDL), 974-1016 (GTPS…VFTL), 1040-1077 (EEYS…FWRL), and 1083-1125 (TFMN…NWYD).

This sequence belongs to the WD repeat WDR6 family. In terms of assembly, interacts with FTSJ1; the interaction is direct, and required for 2'-O-methylation of position 34 in substrate tRNAs. Interacts with IRS4. Interacts with STK11/LKB1.

Its subcellular location is the cytoplasm. Together with methyltransferase FTSJ1, methylates the 2'-O-ribose of nucleotides at position 34 of the tRNA anticodon loop of substrate tRNAs. Required for the correct positioning of the substrate tRNA for methylation. Required to suppress amino acid starvation-induced autophagy. Enhances the STK11/LKB1-induced cell growth suppression activity. The polypeptide is tRNA (34-2'-O)-methyltransferase regulator WDR6 (Wdr6) (Mus musculus (Mouse)).